The chain runs to 292 residues: UPF0761 membrane protein Ping_3482 (292 aa).

Transmembrane regions (helical) follow at residues Leu-43 to Phe-63, Met-100 to Asp-120, Phe-139 to Leu-159, Leu-179 to Val-199, Ala-209 to Leu-229, and Ala-243 to Ile-263.

It belongs to the UPF0761 family.

The protein resides in the cell inner membrane. This Psychromonas ingrahamii (strain DSM 17664 / CCUG 51855 / 37) protein is UPF0761 membrane protein Ping_3482.